The sequence spans 225 residues: Elongation factor 1-beta (225 aa).

One can recognise a GST C-terminal domain in the interval 2–84 (GFGDLKSPAG…ALGKYGPADV (83 aa)). Position 7 is an N6-acetyllysine (K7). S8 and S42 each carry phosphoserine. The interval 78–115 (KYGPADVEDTTGSGATDSKDDDDIDLFGSDDEEESEEA) is disordered. T88 and T93 each carry phosphothreonine. Phosphoserine occurs at positions 95 and 106. Residues 96 to 113 (KDDDDIDLFGSDDEEESE) are compositionally biased toward acidic residues. K147 participates in a covalent cross-link: Glycyl lysine isopeptide (Lys-Gly) (interchain with G-Cter in SUMO2). The residue at position 174 (S174) is a Phosphoserine.

The protein belongs to the EF-1-beta/EF-1-delta family. In terms of assembly, EF-1 is composed of 4 subunits: alpha, beta (alpha subunit of the eEF1B subcomplex), delta (beta subunit of the eEF1B subcomplex), and gamma (gamma subunit of the eEF1B subcomplex). Interacts with elongation factor EEF1A1. Post-translationally, phosphorylation affects the GDP/GTP exchange rate.

Functionally, catalytic subunit of the guanine nucleotide exchange factor (GEF) (eEF1B subcomplex) of the eukaryotic elongation factor 1 complex (eEF1). Stimulates the exchange of GDP for GTP on elongation factor 1A (eEF1A), probably by displacing GDP from the nucleotide binding pocket in eEF1A. This chain is Elongation factor 1-beta (EEF1B2), found in Homo sapiens (Human).